The sequence spans 488 residues: Proline--tRNA ligase (488 aa).

The protein belongs to the class-II aminoacyl-tRNA synthetase family. ProS type 3 subfamily. As to quaternary structure, homodimer.

It localises to the cytoplasm. It carries out the reaction tRNA(Pro) + L-proline + ATP = L-prolyl-tRNA(Pro) + AMP + diphosphate. In terms of biological role, catalyzes the attachment of proline to tRNA(Pro) in a two-step reaction: proline is first activated by ATP to form Pro-AMP and then transferred to the acceptor end of tRNA(Pro). The polypeptide is Proline--tRNA ligase (Symbiobacterium thermophilum (strain DSM 24528 / JCM 14929 / IAM 14863 / T)).